Consider the following 444-residue polypeptide: ATP-dependent protease ATPase subunit HslU (444 aa).

Residues I18, G60–E65, D256, E322, and R394 each bind ATP.

This sequence belongs to the ClpX chaperone family. HslU subfamily. A double ring-shaped homohexamer of HslV is capped on each side by a ring-shaped HslU homohexamer. The assembly of the HslU/HslV complex is dependent on binding of ATP.

The protein localises to the cytoplasm. Its function is as follows. ATPase subunit of a proteasome-like degradation complex; this subunit has chaperone activity. The binding of ATP and its subsequent hydrolysis by HslU are essential for unfolding of protein substrates subsequently hydrolyzed by HslV. HslU recognizes the N-terminal part of its protein substrates and unfolds these before they are guided to HslV for hydrolysis. The protein is ATP-dependent protease ATPase subunit HslU of Klebsiella pneumoniae subsp. pneumoniae (strain ATCC 700721 / MGH 78578).